We begin with the raw amino-acid sequence, 429 residues long: Bifunctional phosphoribosylaminoimidazole carboxylase/phosphoribosylaminoimidazole succinocarboxamide synthetase (429 aa).

The SAICAR synthetase stretch occupies residues 7-264 (ASIEGYKLGK…WVAEQLADIV (258 aa)). Positions 7–264 (ASIEGYKLGK…WVAEQLADIV (258 aa)) are SAICAR synthetase domain. Positions 265-429 (PKKDHLVVIL…DKELRGVRNA (165 aa)) are AIR carboxylase. The tract at residues 270-429 (LVVILMGSAS…DKELRGVRNA (160 aa)) is AIR carboxylase domain. S335 serves as a coordination point for CO2.

The protein in the N-terminal section; belongs to the SAICAR synthetase family. This sequence in the C-terminal section; belongs to the AIR carboxylase family. Class II subfamily. In terms of assembly, homooctamer.

It catalyses the reaction 5-amino-1-(5-phospho-D-ribosyl)imidazole-4-carboxylate + L-aspartate + ATP = (2S)-2-[5-amino-1-(5-phospho-beta-D-ribosyl)imidazole-4-carboxamido]succinate + ADP + phosphate + 2 H(+). The catalysed reaction is 5-amino-1-(5-phospho-D-ribosyl)imidazole-4-carboxylate + H(+) = 5-amino-1-(5-phospho-beta-D-ribosyl)imidazole + CO2. It functions in the pathway purine metabolism; IMP biosynthesis via de novo pathway; 5-amino-1-(5-phospho-D-ribosyl)imidazole-4-carboxamide from 5-amino-1-(5-phospho-D-ribosyl)imidazole-4-carboxylate: step 1/2. The protein operates within purine metabolism; IMP biosynthesis via de novo pathway; 5-amino-1-(5-phospho-D-ribosyl)imidazole-4-carboxylate from 5-amino-1-(5-phospho-D-ribosyl)imidazole (carboxylase route): step 1/1. In terms of biological role, bifunctional phosphoribosylaminoimidazole carboxylase and phosphoribosylaminoimidazole succinocarboxamide synthetase catalyzing two reactions of the de novo purine biosynthetic pathway. This chain is Bifunctional phosphoribosylaminoimidazole carboxylase/phosphoribosylaminoimidazole succinocarboxamide synthetase, found in Drosophila melanogaster (Fruit fly).